A 262-amino-acid chain; its full sequence is Phosphatidylserine decarboxylase proenzyme (262 aa).

Active-site charge relay system; for autoendoproteolytic cleavage activity residues include aspartate 86, histidine 142, and serine 226. Serine 226 functions as the Schiff-base intermediate with substrate; via pyruvic acid; for decarboxylase activity in the catalytic mechanism. Position 226 is a pyruvic acid (Ser); by autocatalysis (serine 226).

It belongs to the phosphatidylserine decarboxylase family. PSD-B subfamily. Prokaryotic type I sub-subfamily. In terms of assembly, heterodimer of a large membrane-associated beta subunit and a small pyruvoyl-containing alpha subunit. Pyruvate serves as cofactor. In terms of processing, is synthesized initially as an inactive proenzyme. Formation of the active enzyme involves a self-maturation process in which the active site pyruvoyl group is generated from an internal serine residue via an autocatalytic post-translational modification. Two non-identical subunits are generated from the proenzyme in this reaction, and the pyruvate is formed at the N-terminus of the alpha chain, which is derived from the carboxyl end of the proenzyme. The autoendoproteolytic cleavage occurs by a canonical serine protease mechanism, in which the side chain hydroxyl group of the serine supplies its oxygen atom to form the C-terminus of the beta chain, while the remainder of the serine residue undergoes an oxidative deamination to produce ammonia and the pyruvoyl prosthetic group on the alpha chain. During this reaction, the Ser that is part of the protease active site of the proenzyme becomes the pyruvoyl prosthetic group, which constitutes an essential element of the active site of the mature decarboxylase.

Its subcellular location is the cell membrane. It carries out the reaction a 1,2-diacyl-sn-glycero-3-phospho-L-serine + H(+) = a 1,2-diacyl-sn-glycero-3-phosphoethanolamine + CO2. Its pathway is phospholipid metabolism; phosphatidylethanolamine biosynthesis; phosphatidylethanolamine from CDP-diacylglycerol: step 2/2. Its function is as follows. Catalyzes the formation of phosphatidylethanolamine (PtdEtn) from phosphatidylserine (PtdSer). This is Phosphatidylserine decarboxylase proenzyme from Bacillus cereus (strain ZK / E33L).